We begin with the raw amino-acid sequence, 360 residues long: Tryptophan--tRNA ligase, mitochondrial (360 aa).

A mitochondrion-targeting transit peptide spans 1-18; sequence MALHSMRKARERWSFIRA. Residues Gln42 and 48–51 contribute to the ATP site; that span reads HLGN. L-tryptophan is bound at residue Asp167. Residues 179-181, Val217, and 226-230 each bind ATP; these read GED and KMSKS.

This sequence belongs to the class-I aminoacyl-tRNA synthetase family. In terms of tissue distribution, brain.

It localises to the mitochondrion matrix. Its subcellular location is the mitochondrion. It catalyses the reaction tRNA(Trp) + L-tryptophan + ATP = L-tryptophyl-tRNA(Trp) + AMP + diphosphate + H(+). Its function is as follows. Catalyzes the attachment of tryptophan to tRNA(Trp) in a two-step reaction: tryptophan is first activated by ATP to form Trp-AMP and then transferred to the acceptor end of tRNA(Trp). The protein is Tryptophan--tRNA ligase, mitochondrial (WARS2) of Homo sapiens (Human).